Reading from the N-terminus, the 142-residue chain is Mitochondrial import receptor subunit TOM22 homolog (142 aa).

Residues 1–11 (MAAAVAAAGAG) are compositionally biased toward low complexity. The interval 1 to 40 (MAAAVAAAGAGEPLSPEELVPKAEAEKAEEDLEEDDDDEL) is disordered. An N-acetylalanine modification is found at alanine 2. Topologically, residues 2 to 82 (AAAVAAAGAG…VAQKMYRFSR (81 aa)) are cytoplasmic. A Phosphoserine modification is found at serine 15. Acidic residues predominate over residues 27-40 (KAEEDLEEDDDDEL). An import sequence; necessary for mitochondrion outer membrane localization and integration in the TOM complex region spans residues 41-50 (DETLSERLWG). Residue threonine 43 is modified to Phosphothreonine. Phosphoserine is present on serine 45. The chain crosses the membrane as a helical span at residues 83-103 (AALWIGTTSFMILVLPVVFET). The interval 83-103 (AALWIGTTSFMILVLPVVFET) is TMD; necessary for mitochondrion outer membrane localization and integration in the TOM complex. At 104–142 (EKLQMEQQQQLQQRQILLGPNTGLSGGMPGALPPLPGKI) the chain is on the mitochondrial intermembrane side. The interval 123 to 142 (PNTGLSGGMPGALPPLPGKI) is C-tail signal; necessary for mitochondrion outer membrane localization and integration in the TOM complex.

Belongs to the Tom22 family. As to quaternary structure, forms part of the preprotein translocase complex of the outer mitochondrial membrane (TOM complex) which consists of at least 7 different proteins (TOMM5, TOMM6, TOMM7, TOMM20, TOMM22, TOMM40 and TOMM70). Interacts with TOMM40. Interacts with PPP2R2B.

It is found in the mitochondrion outer membrane. Central receptor component of the translocase of the outer membrane of mitochondria (TOM complex) responsible for the recognition and translocation of cytosolically synthesized mitochondrial preproteins. Together with the peripheral receptor TOM20 functions as the transit peptide receptor and facilitates the movement of preproteins into the translocation pore. Required for the translocation across the mitochondrial outer membrane of cytochrome P450 monooxygenases. The sequence is that of Mitochondrial import receptor subunit TOM22 homolog (Tomm22) from Rattus norvegicus (Rat).